We begin with the raw amino-acid sequence, 339 residues long: Hairy/enhancer-of-split related with YRPW motif protein 2 (339 aa).

The tract at residues 1–52 (MKRPCEETTSESDLDETIDVGSENNYPGHATSSVMRSNSPTTTSQIMARKKR) is disordered. Acidic residues predominate over residues 8 to 18 (TTSESDLDETI). Polar residues predominate over residues 22 to 46 (SENNYPGHATSSVMRSNSPTTTSQI). The segment at 47–116 (MARKKRRGII…GGKGYFDAHA (70 aa)) is transcriptional repression and interaction with NCOR1 and SIN3A. Residues 48-103 (ARKKRRGIIEKRRRDRINNSLSELRRLVPTAFEKQGSAKLEKAEILQMTVDHLKML) form the bHLH domain. The Orange domain maps to 122–157 (MSIGFRECLTEVARYLSSVEGLDPSDPLRVRLVSHL). A disordered region spans residues 310–339 (SVSAASSPQQTSTGTNNKPYQPWGTEVGAF). Over residues 318-328 (QQTSTGTNNKP) the composition is skewed to polar residues. Residues 329–332 (YQPW) carry the YQPW motif motif.

This sequence belongs to the HEY family. May self-associate. Interacts with ARNT. Interacts with GATA4, GATA6, HES1 and HEYL. Interacts with HDAC1, NCOR1 and SIN3A. In terms of tissue distribution, highly expressed in the aorta, lower expression detected in the heart, brain, kidney, lung, muscle, ovary and testis.

The protein resides in the nucleus. Transcriptional repressor which functions as a downstream effector of Notch signaling in cardiovascular development. Specifically required for the Notch-induced endocardial epithelial to mesenchymal transition, which is itself criticial for cardiac valve and septum development. May be required in conjunction with HEY1 to specify arterial cell fate or identity. Promotes maintenance of neuronal precursor cells and glial versus neuronal fate specification. Binds preferentially to the canonical E box sequence 5'-CACGTG-3'. Represses transcription by the cardiac transcriptional activators GATA4 and GATA6 and by the neuronal bHLH factors ASCL1/MASH1 and NEUROD4/MATH3. The chain is Hairy/enhancer-of-split related with YRPW motif protein 2 (Hey2) from Mus musculus (Mouse).